The sequence spans 336 residues: MKLILREYNLKLKHTFTISRESIDFQPSLIVELQSEGFSGFGEATSNPYYNITVPMMMQDLEKIRSIIEDTENETPDVFWAKIHPYLKNDMFALCALDLAYNDLYARKKGKKLYELWNYTTERNPMTDYTIGIASIDKMVSKMQELPWPIYKIKLGTKEDIEIVKELRKHTNAVFRIDANCGWGVEETINNSVELKKLGVEFLEQPMKADNWEGHKEVFKHSVLPVIADESCIIEEDVAKCFNHFHGVNVKLVKCGGLTPGKRMIEEAKKLGLRTMVGCMTESTVGISAIAHLLPQLDYVDMDGALLLAEDIATGVTIKDGVVSYSNLNGTGVTLL.

Substrate-binding positions include Thr-130 and 152–154; that span reads KIK. 3 residues coordinate Mg(2+): Asp-178, Glu-204, and Asp-229. Substrate is bound by residues Lys-251 and 301–303; that span reads DMD.

The protein belongs to the mandelate racemase/muconate lactonizing enzyme family. Mg(2+) serves as cofactor.

In terms of biological role, catalyzes the epimerization of D-Ala-D-Ala to D-Ala-L-Ala. Has broad substrate specificity and catalyzes the epimerization of a variety of dipeptides containing an N-terminal Ala followed by Ser, Thr, Val, Met, His, Phe or Trp (in vitro). This chain is L-Ala-D/L-amino acid epimerase, found in Flavobacterium johnsoniae (strain ATCC 17061 / DSM 2064 / JCM 8514 / BCRC 14874 / CCUG 350202 / NBRC 14942 / NCIMB 11054 / UW101) (Cytophaga johnsonae).